The sequence spans 118 residues: Small ribosomal subunit protein uS13 (118 aa).

Residues 94 to 118 (GLPLRGQRTKTNARTRKGPRKPIRK) form a disordered region.

Belongs to the universal ribosomal protein uS13 family. Part of the 30S ribosomal subunit. Forms a loose heterodimer with protein S19. Forms two bridges to the 50S subunit in the 70S ribosome.

In terms of biological role, located at the top of the head of the 30S subunit, it contacts several helices of the 16S rRNA. In the 70S ribosome it contacts the 23S rRNA (bridge B1a) and protein L5 of the 50S subunit (bridge B1b), connecting the 2 subunits; these bridges are implicated in subunit movement. Contacts the tRNAs in the A and P-sites. In Chromohalobacter salexigens (strain ATCC BAA-138 / DSM 3043 / CIP 106854 / NCIMB 13768 / 1H11), this protein is Small ribosomal subunit protein uS13.